The primary structure comprises 420 residues: Gamma-glutamyl phosphate reductase (420 aa).

Belongs to the gamma-glutamyl phosphate reductase family.

The protein resides in the cytoplasm. The enzyme catalyses L-glutamate 5-semialdehyde + phosphate + NADP(+) = L-glutamyl 5-phosphate + NADPH + H(+). Its pathway is amino-acid biosynthesis; L-proline biosynthesis; L-glutamate 5-semialdehyde from L-glutamate: step 2/2. In terms of biological role, catalyzes the NADPH-dependent reduction of L-glutamate 5-phosphate into L-glutamate 5-semialdehyde and phosphate. The product spontaneously undergoes cyclization to form 1-pyrroline-5-carboxylate. This chain is Gamma-glutamyl phosphate reductase, found in Streptococcus pneumoniae (strain JJA).